The chain runs to 62 residues: Large ribosomal subunit protein uL30 (62 aa).

The protein belongs to the universal ribosomal protein uL30 family. In terms of assembly, part of the 50S ribosomal subunit.

The polypeptide is Large ribosomal subunit protein uL30 (Prosthecochloris aestuarii (strain DSM 271 / SK 413)).